The chain runs to 515 residues: Protein disulfide-isomerase (515 aa).

The N-terminal stretch at methionine 1–alanine 22 is a signal peptide. 2 Thioredoxin domains span residues glutamate 23–glycine 139 and phenylalanine 351–glutamine 480. Residues cysteine 58, cysteine 61, cysteine 402, and cysteine 405 each act as nucleophile in the active site. Intrachain disulfides connect cysteine 58/cysteine 61 and cysteine 402/cysteine 405. The interval serine 477 to leucine 515 is disordered. A compositionally biased stretch (acidic residues) spans alanine 484 to glutamate 507. The Prevents secretion from ER signature appears at lysine 512 to leucine 515.

This sequence belongs to the protein disulfide isomerase family. Heterodimer; heterodimerizes with the protein microsomal triglyceride transfer MTTP. Homodimer. Monomers and homotetramers may also occur. Also constitutes the structural subunit of prolyl 4-hydroxylase. Stabilizes this enzyme and retains it in the ER without contributing to the catalytic activity. Binds UBQLN1.

It is found in the endoplasmic reticulum. The protein resides in the endoplasmic reticulum lumen. Its subcellular location is the cell membrane. It carries out the reaction Catalyzes the rearrangement of -S-S- bonds in proteins.. This multifunctional protein catalyzes the formation, breakage and rearrangement of disulfide bonds. At the cell surface, seems to act as a reductase that cleaves disulfide bonds of proteins attached to the cell. May therefore cause structural modifications of exofacial proteins. Inside the cell, seems to form/rearrange disulfide bonds of nascent proteins. At high concentrations, functions as a chaperone that inhibits aggregation of misfolded proteins. At low concentrations, facilitates aggregation (anti-chaperone activity). Also acts a structural subunit of various enzymes such as prolyl 4-hydroxylase. This Gallus gallus (Chicken) protein is Protein disulfide-isomerase (P4HB).